Consider the following 833-residue polypeptide: DNA ligase (833 aa).

Residues 35-39 (DADYD), 84-85 (SL), and Glu115 contribute to the NAD(+) site. Lys117 serves as the catalytic N6-AMP-lysine intermediate. Arg138, Glu175, Lys292, and Lys316 together coordinate NAD(+). Zn(2+) is bound by residues Cys410, Cys413, Cys428, and Cys434. The region spanning 750 to 833 (LQTGPLDGQT…AFLGDHGQQP (84 aa)) is the BRCT domain.

It belongs to the NAD-dependent DNA ligase family. LigA subfamily. Requires Mg(2+) as cofactor. The cofactor is Mn(2+).

It catalyses the reaction NAD(+) + (deoxyribonucleotide)n-3'-hydroxyl + 5'-phospho-(deoxyribonucleotide)m = (deoxyribonucleotide)n+m + AMP + beta-nicotinamide D-nucleotide.. DNA ligase that catalyzes the formation of phosphodiester linkages between 5'-phosphoryl and 3'-hydroxyl groups in double-stranded DNA using NAD as a coenzyme and as the energy source for the reaction. It is essential for DNA replication and repair of damaged DNA. This Xanthomonas euvesicatoria pv. vesicatoria (strain 85-10) (Xanthomonas campestris pv. vesicatoria) protein is DNA ligase.